A 444-amino-acid chain; its full sequence is CCA-adding enzyme (444 aa).

Positions 57 and 60 each coordinate ATP. Residues S57 and R60 each coordinate CTP. Mg(2+) contacts are provided by D69, D71, and D124. ATP is bound by residues H147, K168, and Y177. 3 residues coordinate CTP: H147, K168, and Y177.

Belongs to the tRNA nucleotidyltransferase/poly(A) polymerase family. Archaeal CCA-adding enzyme subfamily. Homodimer. Mg(2+) is required as a cofactor.

The enzyme catalyses a tRNA precursor + 2 CTP + ATP = a tRNA with a 3' CCA end + 3 diphosphate. It catalyses the reaction a tRNA with a 3' CCA end + 2 CTP + ATP = a tRNA with a 3' CCACCA end + 3 diphosphate. Catalyzes the addition and repair of the essential 3'-terminal CCA sequence in tRNAs without using a nucleic acid template. Adds these three nucleotides in the order of C, C, and A to the tRNA nucleotide-73, using CTP and ATP as substrates and producing inorganic pyrophosphate. tRNA 3'-terminal CCA addition is required both for tRNA processing and repair. Also involved in tRNA surveillance by mediating tandem CCA addition to generate a CCACCA at the 3' terminus of unstable tRNAs. While stable tRNAs receive only 3'-terminal CCA, unstable tRNAs are marked with CCACCA and rapidly degraded. The chain is CCA-adding enzyme from Methanococcus maripaludis (strain C5 / ATCC BAA-1333).